Here is a 274-residue protein sequence, read N- to C-terminus: 2-dehydro-3-deoxyphosphooctonate aldolase (274 aa).

Belongs to the KdsA family.

It is found in the cytoplasm. The catalysed reaction is D-arabinose 5-phosphate + phosphoenolpyruvate + H2O = 3-deoxy-alpha-D-manno-2-octulosonate-8-phosphate + phosphate. The protein operates within carbohydrate biosynthesis; 3-deoxy-D-manno-octulosonate biosynthesis; 3-deoxy-D-manno-octulosonate from D-ribulose 5-phosphate: step 2/3. Its pathway is bacterial outer membrane biogenesis; lipopolysaccharide biosynthesis. This chain is 2-dehydro-3-deoxyphosphooctonate aldolase, found in Rickettsia rickettsii (strain Iowa).